The chain runs to 197 residues: Molybdenum cofactor guanylyltransferase (197 aa).

Residues 10 to 12 (LAG), K23, N51, D69, and D99 each bind GTP. Residue D99 coordinates Mg(2+).

Belongs to the MobA family. As to quaternary structure, monomer. The cofactor is Mg(2+).

It is found in the cytoplasm. The enzyme catalyses Mo-molybdopterin + GTP + H(+) = Mo-molybdopterin guanine dinucleotide + diphosphate. In terms of biological role, transfers a GMP moiety from GTP to Mo-molybdopterin (Mo-MPT) cofactor (Moco or molybdenum cofactor) to form Mo-molybdopterin guanine dinucleotide (Mo-MGD) cofactor. The chain is Molybdenum cofactor guanylyltransferase from Shewanella sp. (strain ANA-3).